Reading from the N-terminus, the 308-residue chain is Autophagy-related protein 3 (308 aa).

A flexible region region spans residues 83–159 (NFVETQTTET…NELADDDDDI (77 aa)). Positions 89–121 (TTETRDVGDGWELEGQSEGERESGREDTKSNEE) are disordered. Residues 106–120 (EGERESGREDTKSNE) are compositionally biased toward basic and acidic residues. The active-site Glycyl thioester intermediate is Cys235. The segment at 239–283 (NVMKVLMEKVRASRHRARDTEAQKNAEEDWEDLQSDIDDGLRVDQ) is handle region.

This sequence belongs to the ATG3 family. In terms of assembly, monomer. Interacts with ATG8 through an intermediate thioester bond between Cys-235 and the C-terminal Gly of ATG8. Interacts with the C-terminal region of the E1-like ATG7 enzyme. Also interacts with the ATG12-ATG5 conjugate.

Its subcellular location is the cytoplasm. In terms of biological role, E2 conjugating enzyme required for the cytoplasm to vacuole transport (Cvt) and autophagy. Required for selective autophagic degradation of the nucleus (nucleophagy) as well as for mitophagy which contributes to regulate mitochondrial quantity and quality by eliminating the mitochondria to a basal level to fulfill cellular energy requirements and preventing excess ROS production. Responsible for the E2-like covalent binding of phosphatidylethanolamine to the C-terminal Gly of ATG8. The ATG12-ATG5 conjugate plays a role of an E3 and promotes the transfer of ATG8 from ATG3 to phosphatidylethanolamine (PE). This step is required for the membrane association of ATG8. The formation of the ATG8-phosphatidylethanolamine conjugate is essential for autophagy and for the cytoplasm to vacuole transport (Cvt). The ATG8-PE conjugate mediates tethering between adjacent membranes and stimulates membrane hemifusion, leading to expansion of the autophagosomal membrane during autophagy. In Kluyveromyces marxianus (strain DMKU3-1042 / BCC 29191 / NBRC 104275) (Yeast), this protein is Autophagy-related protein 3.